Here is a 630-residue protein sequence, read N- to C-terminus: Arginine--tRNA ligase (630 aa).

Positions 120-130 (ANPVHPLHIGH) match the 'HIGH' region motif.

This sequence belongs to the class-I aminoacyl-tRNA synthetase family.

The protein resides in the cytoplasm. The catalysed reaction is tRNA(Arg) + L-arginine + ATP = L-arginyl-tRNA(Arg) + AMP + diphosphate. The chain is Arginine--tRNA ligase from Pyrobaculum aerophilum (strain ATCC 51768 / DSM 7523 / JCM 9630 / CIP 104966 / NBRC 100827 / IM2).